The primary structure comprises 33 residues: Cytochrome b6-f complex subunit 8 (33 aa).

Residues 2-22 (IFQIGWAALAAIFTFSIAMVV) form a helical membrane-spanning segment.

The protein belongs to the PetN family. The 4 large subunits of the cytochrome b6-f complex are cytochrome b6, subunit IV (17 kDa polypeptide, PetD), cytochrome f and the Rieske protein, while the 4 small subunits are PetG, PetL, PetM and PetN. The complex functions as a dimer.

The protein localises to the cellular thylakoid membrane. Component of the cytochrome b6-f complex, which mediates electron transfer between photosystem II (PSII) and photosystem I (PSI), cyclic electron flow around PSI, and state transitions. In Prochlorococcus marinus (strain MIT 9301), this protein is Cytochrome b6-f complex subunit 8.